The chain runs to 378 residues: Zinc transporter 7 (378 aa).

The Cytoplasmic portion of the chain corresponds to 1-37; that stretch reads MLPLSIKDDEYKPPKFNLFGKISGWFRSILSDKTSRN. The helical transmembrane segment at 38–58 threads the bilayer; the sequence is LFFFLCLNLSFAFVELLYGIW. Residues 59 to 67 lie on the Lumenal side of the membrane; sequence SNCLGLISD. The chain crosses the membrane as a helical span at residues 68–88; the sequence is SFHMFFDSTAILAGLAASVIS. Topologically, residues 89–102 are cytoplasmic; that stretch reads KWRDNDAFSYGYVR. The helical transmembrane segment at 103–123 threads the bilayer; it reads AEVLAGFVNGLFLIFTAFFIF. Over 124 to 140 the chain is Lumenal; that stretch reads SEGVERALAPPDVHHER. The chain crosses the membrane as a helical span at residues 141–161; the sequence is LLLVSILGFVVNLVGIFVFNH. The tract at residues 161–220 is his-rich loop; that stretch reads HGGHGHSHGSGHGHSHSLFNGALDHSHGHEDHCHSHEAKHGAAHSHDHDHAHGHGHLHSH. Topologically, residues 162–238 are cytoplasmic; it reads GGHGHSHGSG…AGPSRQILQG (77 aa). Over residues 186-223 the composition is skewed to basic and acidic residues; that stretch reads SHGHEDHCHSHEAKHGAAHSHDHDHAHGHGHLHSHDGP. The disordered stretch occupies residues 186–224; sequence SHGHEDHCHSHEAKHGAAHSHDHDHAHGHGHLHSHDGPS. The chain crosses the membrane as a helical span at residues 239-259; sequence VFLHILADTLGSIGVIASAIM. Residues 260 to 264 lie on the Lumenal side of the membrane; the sequence is MQNFG. Residues 265-285 traverse the membrane as a helical segment; it reads LMIADPICSILIAILIVVSVI. Topologically, residues 286–378 are cytoplasmic; it reads PLLRESVGIL…LYVQIDFAAM (93 aa).

The protein belongs to the cation diffusion facilitator (CDF) transporter (TC 2.A.4) family. SLC30A subfamily. As to quaternary structure, homooligomer. As to expression, highly expressed in liver, spleen, duodenum and part of the jejunum of small intestine (at protein level). Moderately expressed in kidney, lung, and brain. Barely detectable in heart. In brain, expressed in cerebellum, cerebral cortex and hippocampus (at protein level).

The protein resides in the golgi apparatus membrane. It is found in the cytoplasmic vesicle. Its subcellular location is the golgi apparatus. It localises to the trans-Golgi network. The protein localises to the sarcoplasmic reticulum. The protein resides in the mitochondrion. The catalysed reaction is Zn(2+)(in) = Zn(2+)(out). Functionally, zinc ion transporter mediating zinc entry from the cytosol into the lumen of organelles along the secretory pathway. By contributing to zinc ion homeostasis within the early secretory pathway, regulates the activation and folding of enzymes like alkaline phosphatases. The polypeptide is Zinc transporter 7 (Mus musculus (Mouse)).